The primary structure comprises 467 residues: Asparagine--tRNA ligase (467 aa).

This sequence belongs to the class-II aminoacyl-tRNA synthetase family. Homodimer.

It is found in the cytoplasm. The enzyme catalyses tRNA(Asn) + L-asparagine + ATP = L-asparaginyl-tRNA(Asn) + AMP + diphosphate + H(+). This Haemophilus influenzae (strain PittEE) protein is Asparagine--tRNA ligase.